A 633-amino-acid chain; its full sequence is Protein arginine N-methyltransferase 5 (633 aa).

The 308-residue stretch at 304 to 611 folds into the SAM-dependent MTase PRMT-type domain; sequence LQSPLQPLMD…NNGKKVWYEW (308 aa). S-adenosyl-L-methionine is bound at residue Tyr-320. Residue Phe-323 participates in a protein binding. S-adenosyl-L-methionine contacts are provided by residues 329–330, Glu-388, and 414–416; these read KY and GDM. Glu-431 and Glu-440 together coordinate a protein. Active-site proton donor/acceptor residues include Glu-431 and Glu-440. Residue Glu-440 participates in S-adenosyl-L-methionine binding.

This sequence belongs to the class I-like SAM-binding methyltransferase superfamily. Protein arginine N-methyltransferase family. As to quaternary structure, heterotetramer; dimer of heterodimer with wdr77. Interacts with wee2-a; this interaction is disrupted upon activation of the DNA replication checkpoint. Detected in egg (at protein level).

The protein resides in the cytoplasm. Its subcellular location is the nucleus. It localises to the cytosol. It catalyses the reaction L-arginyl-[protein] + 2 S-adenosyl-L-methionine = N(omega),N(omega)'-dimethyl-L-arginyl-[protein] + 2 S-adenosyl-L-homocysteine + 2 H(+). Functionally, arginine methyltransferase that can both catalyze the formation of omega-N monomethylarginine (MMA) and symmetrical dimethylarginine (sDMA), with a preference for the formation of MMA. Specifically mediates the symmetrical dimethylation of arginine residues in the small nuclear ribonucleoproteins; such methylation being required for the assembly and biogenesis of snRNP core particles. Methylates the arginine in the motif G-R-G-X-G in its substrates histone H2A, H2AX and H4, producing both monomethylated and symmetrically dimethylated 'Arg-3'. Methylates nucleoplasmin at 'Arg-192', producing both monomethylated and symmetrically dimethylated 'Arg-192'. Involved in the DNA replication checkpoint. Promotes entry into mitosis by promoting the proteasomal degradation of wee2-a. May act as a transcriptional corepressor in CRY1-mediated repression of the core circadian component PER1. Involved in spliceosome maturation and mRNA splicing. The protein is Protein arginine N-methyltransferase 5 (prmt5) of Xenopus laevis (African clawed frog).